Consider the following 333-residue polypeptide: E3 ubiquitin-protein ligase MIR1 (333 aa).

An RING-CH-type zinc finger spans residues 1–60; sequence MEDEDVPVCWICNEELGNERFRACGCTGELENVHRSCLSTWLTISRNTACQICGVVYNTR. The Cytoplasmic segment spans residues 1 to 82; that stretch reads MEDEDVPVCW…PRLTYQEGLE (82 aa). The Zn(2+) site is built by Cys-9, Cys-12, Cys-24, Cys-26, His-34, Cys-37, Cys-50, and Cys-53. The helical transmembrane segment at 83 to 103 threads the bilayer; it reads LIVFIFIMTLGAAGLAAATWV. The Extracellular segment spans residues 104 to 121; that stretch reads WLYIVGGHDPEIDHVAAA. Residues 122–142 traverse the membrane as a helical segment; that stretch reads AYYVFFVFYQLFVVFGLGAFF. At 143-333 the chain is on the cytoplasmic side; it reads HMMRHVGRAY…SAVSSALMFH (191 aa). Residues 187-257 form a disordered region; that stretch reads GDNQDEEGPA…GRDDNVEPTA (71 aa). Low complexity predominate over residues 195–221; the sequence is PAGAAPGDQNGPAGAAPGDQDGPADGA. Residues 235 to 252 show a composition bias toward basic and acidic residues; sequence AGYKEAGEPTHNDGRDDN.

Binds human MHC-I and CD1D.

Its subcellular location is the host cell membrane. The protein localises to the host endoplasmic reticulum. The enzyme catalyses [E2 ubiquitin-conjugating enzyme]-S-ubiquitinyl-L-cysteine + [acceptor protein]-L-cysteine = [E2 ubiquitin-conjugating enzyme]-L-cysteine + [acceptor protein]-S-ubiquitinyl-L-cysteine.. The protein operates within protein modification; protein ubiquitination. In terms of biological role, membrane-bound E3 ubiquitin ligase expressed during late stages of lytic replication to mediate polyubiquitination of various host membrane proteins related to the immune response. Promotes ubiquitination and subsequent degradation of host MHC-I and CD1D molecules, DC-SIGN and DC-SIGNR, presumably to prevent lysis of infected cells by cytotoxic T-lymphocytes. Binds target molecules through transmembrane interaction. E3 ubiquitin-protein ligases accept ubiquitin from specific E2 ubiquitin-conjugating enzymes, and then transfer it to target protein. The result of this ubiquitination is the enhancement of the endocytosis of the target chain and the delivery to the lysosome, where it is proteolytically destroyed. Induces ubiquitination not only on lysines, but also on cysteine residues. In Human herpesvirus 8 type P (isolate GK18) (HHV-8), this protein is E3 ubiquitin-protein ligase MIR1 (K3).